A 447-amino-acid polypeptide reads, in one-letter code: Tyrosine aminotransferase (447 aa).

Lys273 carries the post-translational modification N6-(pyridoxal phosphate)lysine. Ser441 is modified (phosphoserine).

It belongs to the class-I pyridoxal-phosphate-dependent aminotransferase family. As to quaternary structure, homodimer. Requires pyridoxal 5'-phosphate as cofactor.

The catalysed reaction is L-tyrosine + 2-oxoglutarate = 3-(4-hydroxyphenyl)pyruvate + L-glutamate. The protein operates within amino-acid degradation; L-phenylalanine degradation; acetoacetate and fumarate from L-phenylalanine: step 2/6. Transaminase involved in tyrosine breakdown. Converts tyrosine to p-hydroxyphenylpyruvate. Can catalyze the reverse reaction, using glutamic acid, with 2-oxoglutarate as cosubstrate (in vitro). Has much lower affinity and transaminase activity for phenylalanine. This chain is Tyrosine aminotransferase (TAT), found in Bos taurus (Bovine).